We begin with the raw amino-acid sequence, 554 residues long: Urocanate hydratase (554 aa).

NAD(+)-binding positions include 51–52 (GG), Gln-129, 175–177 (GMG), Glu-195, Arg-200, 241–242 (NA), 262–266 (QTSAH), 272–273 (YL), and Tyr-321. Residue Cys-409 is part of the active site. Gly-491 contacts NAD(+).

This sequence belongs to the urocanase family. NAD(+) is required as a cofactor.

Its subcellular location is the cytoplasm. It carries out the reaction 4-imidazolone-5-propanoate = trans-urocanate + H2O. It participates in amino-acid degradation; L-histidine degradation into L-glutamate; N-formimidoyl-L-glutamate from L-histidine: step 2/3. Functionally, catalyzes the conversion of urocanate to 4-imidazolone-5-propionate. The protein is Urocanate hydratase of Caulobacter sp. (strain K31).